Reading from the N-terminus, the 183-residue chain is Adenine phosphoribosyltransferase (183 aa).

It belongs to the purine/pyrimidine phosphoribosyltransferase family. As to quaternary structure, homodimer.

The protein localises to the cytoplasm. The catalysed reaction is AMP + diphosphate = 5-phospho-alpha-D-ribose 1-diphosphate + adenine. The protein operates within purine metabolism; AMP biosynthesis via salvage pathway; AMP from adenine: step 1/1. Its function is as follows. Catalyzes a salvage reaction resulting in the formation of AMP, that is energically less costly than de novo synthesis. This is Adenine phosphoribosyltransferase from Shewanella pealeana (strain ATCC 700345 / ANG-SQ1).